The following is a 786-amino-acid chain: DNA ligase (786 aa).

Residues 32 to 36 (DAEYD), 81 to 82 (SL), and glutamate 121 contribute to the NAD(+) site. Lysine 123 functions as the N6-AMP-lysine intermediate in the catalytic mechanism. The NAD(+) site is built by arginine 144, glutamate 181, lysine 297, and lysine 321. The Zn(2+) site is built by cysteine 415, cysteine 418, cysteine 445, and cysteine 451. The BRCT domain maps to 703-786 (AEGLPLAGQT…EQLKSYGIEA (84 aa)).

The protein belongs to the NAD-dependent DNA ligase family. LigA subfamily. It depends on Mg(2+) as a cofactor. Mn(2+) is required as a cofactor.

The catalysed reaction is NAD(+) + (deoxyribonucleotide)n-3'-hydroxyl + 5'-phospho-(deoxyribonucleotide)m = (deoxyribonucleotide)n+m + AMP + beta-nicotinamide D-nucleotide.. In terms of biological role, DNA ligase that catalyzes the formation of phosphodiester linkages between 5'-phosphoryl and 3'-hydroxyl groups in double-stranded DNA using NAD as a coenzyme and as the energy source for the reaction. It is essential for DNA replication and repair of damaged DNA. This Ectopseudomonas mendocina (strain ymp) (Pseudomonas mendocina) protein is DNA ligase.